We begin with the raw amino-acid sequence, 232 residues long: LRRN4 C-terminal-like protein (232 aa).

The first 22 residues, 1 to 22, serve as a signal peptide directing secretion; sequence MPHSPCLLWLLAVTSLVPGTQP. Residues 23–189 lie on the Extracellular side of the membrane; it reads LVAGDLEGDE…RLTVPPRPLT (167 aa). In terms of domain architecture, Fibronectin type-III spans 77-172; sequence PPHPPRLGEV…GAEGLDSADG (96 aa). The N-linked (GlcNAc...) asparagine glycan is linked to Asn127. The helical transmembrane segment at 190–210 threads the bilayer; the sequence is LLHAAMGVGSALALLSCSALV. Residues 211 to 232 lie on the Cytoplasmic side of the membrane; it reads WHFCLRQRWGCPRRGRPSHAGL.

Its subcellular location is the membrane. This is LRRN4 C-terminal-like protein (LRRN4CL) from Bos taurus (Bovine).